The following is a 284-amino-acid chain: Bifunctional protein FolD (284 aa).

NADP(+) is bound by residues 163–165, Ile188, and Ile229; that span reads GAS.

The protein belongs to the tetrahydrofolate dehydrogenase/cyclohydrolase family. As to quaternary structure, homodimer.

The catalysed reaction is (6R)-5,10-methylene-5,6,7,8-tetrahydrofolate + NADP(+) = (6R)-5,10-methenyltetrahydrofolate + NADPH. It catalyses the reaction (6R)-5,10-methenyltetrahydrofolate + H2O = (6R)-10-formyltetrahydrofolate + H(+). The protein operates within one-carbon metabolism; tetrahydrofolate interconversion. Catalyzes the oxidation of 5,10-methylenetetrahydrofolate to 5,10-methenyltetrahydrofolate and then the hydrolysis of 5,10-methenyltetrahydrofolate to 10-formyltetrahydrofolate. The chain is Bifunctional protein FolD from Nautilia profundicola (strain ATCC BAA-1463 / DSM 18972 / AmH).